A 123-amino-acid polypeptide reads, in one-letter code: WAP four-disulfide core domain protein 5 (123 aa).

Residues 1 to 24 form the signal peptide; it reads MRFGRLLLLAVLLAGVSQLPAVSG. WAP domains are found at residues 27-74 and 75-121; these read KGEK…IPRV and SVKL…RDPV. 8 cysteine pairs are disulfide-bonded: Cys-34-Cys-62, Cys-41-Cys-66, Cys-49-Cys-61, Cys-55-Cys-70, Cys-81-Cys-109, Cys-88-Cys-113, Cys-96-Cys-108, and Cys-102-Cys-117.

The protein resides in the secreted. In terms of biological role, putative acid-stable proteinase inhibitor. In Otolemur garnettii (Small-eared galago), this protein is WAP four-disulfide core domain protein 5 (WFDC5).